The sequence spans 284 residues: Tropomyosin (284 aa).

Positions 1–284 form a coiled coil; the sequence is MEAIKNKMQA…DQTFAELTGY (284 aa).

The protein belongs to the tropomyosin family. Homodimer.

Its function is as follows. Tropomyosin, in association with the troponin complex, plays a central role in the calcium dependent regulation of muscle contraction. In Dermatophagoides pteronyssinus (European house dust mite), this protein is Tropomyosin.